We begin with the raw amino-acid sequence, 214 residues long: Methyltransferase HEMK2 (214 aa).

Positions 29, 51, 53, 77, 103, 104, and 122 each coordinate S-adenosyl-L-homocysteine. The S-adenosyl-L-methionine site is built by Thr29, Glu51, Gly53, Asp77, Asp103, Leu104, and Asn122. Asn122 provides a ligand contact to a protein.

This sequence belongs to the eukaryotic/archaeal PrmC-related family. Heterodimer; heterodimerization with TRMT112 is required for S-adenosyl-L-methionine-binding. In terms of assembly, does not interact with TRMT112. In terms of processing, ubiquitinated, leading to its degradation by the proteasome. Widely expressed, with highest expression in parathyroid and pituitary glands, followed by adrenal gland and kidney, and lowest expression in leukocytes and mammary gland.

The protein resides in the nucleus. It carries out the reaction L-lysyl-[histone] + S-adenosyl-L-methionine = N(6)-methyl-L-lysyl-[histone] + S-adenosyl-L-homocysteine + H(+). The catalysed reaction is L-glutaminyl-[protein] + S-adenosyl-L-methionine = N(5)-methyl-L-glutaminyl-[protein] + S-adenosyl-L-homocysteine + H(+). It catalyses the reaction methylarsonous acid + S-adenosyl-L-methionine = dimethylarsinate + S-adenosyl-L-homocysteine + 2 H(+). Its function is as follows. Methyltransferase that can methylate proteins and, to a lower extent, arsenic. Catalytic subunit of a heterodimer with TRMT112, which monomethylates 'Lys-12' of histone H4 (H4K12me1), a modification present at the promoters of numerous genes encoding cell cycle regulators. Catalytic subunit of a heterodimer with TRMT112, which catalyzes N5-methylation of Glu residue of proteins with a Gly-Gln-Xaa-Xaa-Xaa-Arg motif. Methylates ETF1 on 'Gln-185'; ETF1 needs to be complexed to ERF3 in its GTP-bound form to be efficiently methylated. May also play a role in the modulation of arsenic-induced toxicity by mediating the conversion of monomethylarsonous acid (3+) into the less toxic dimethylarsonic acid. It however only plays a limited role in arsenic metabolism compared with AS3MT. This chain is Methyltransferase HEMK2, found in Homo sapiens (Human).